The following is a 212-amino-acid chain: ATP-dependent dethiobiotin synthetase BioD (212 aa).

Residue 12-17 coordinates ATP; it reads DCGKTF. Thr-16 lines the Mg(2+) pocket. Residue Lys-33 is part of the active site. A substrate-binding site is contributed by Ser-37. ATP-binding positions include Asp-50, 110–113, and 170–171; these read EGAG and NC. The Mg(2+) site is built by Asp-50 and Glu-110.

It belongs to the dethiobiotin synthetase family. Homodimer. The cofactor is Mg(2+).

It is found in the cytoplasm. The catalysed reaction is (7R,8S)-7,8-diammoniononanoate + CO2 + ATP = (4R,5S)-dethiobiotin + ADP + phosphate + 3 H(+). It participates in cofactor biosynthesis; biotin biosynthesis; biotin from 7,8-diaminononanoate: step 1/2. In terms of biological role, catalyzes a mechanistically unusual reaction, the ATP-dependent insertion of CO2 between the N7 and N8 nitrogen atoms of 7,8-diaminopelargonic acid (DAPA, also called 7,8-diammoniononanoate) to form a ureido ring. This is ATP-dependent dethiobiotin synthetase BioD from Legionella pneumophila (strain Paris).